A 590-amino-acid polypeptide reads, in one-letter code: Cytosolic Fe-S cluster assembly factor nar1 (590 aa).

Residue C20 coordinates [4Fe-4S] cluster. The disordered stretch occupies residues 25–50 (ESLPQKQSNENPYEVTTEDKVQPENP). Positions 60, 63, 66, 204, and 259 each coordinate [4Fe-4S] cluster. A disordered region spans residues 423 to 446 (PGAKVATGQTAGGRRQPISRNGAS). [4Fe-4S] cluster contacts are provided by C461 and C465.

It belongs to the NARF family.

In terms of biological role, component of the cytosolic Fe/S protein assembly machinery. Required for maturation of extramitochondrial Fe/S proteins. May play a role in the transfer of pre-assembled Fe/S clusters to target apoproteins. This is Cytosolic Fe-S cluster assembly factor nar1 (nar1) from Emericella nidulans (strain FGSC A4 / ATCC 38163 / CBS 112.46 / NRRL 194 / M139) (Aspergillus nidulans).